Here is a 147-residue protein sequence, read N- to C-terminus: UPF0208 membrane protein CGSHiEE_06015 (147 aa).

Transmembrane regions (helical) follow at residues 38 to 58 (FAQK…QIYA) and 67 to 87 (IAIL…YWLG).

It belongs to the UPF0208 family.

Its subcellular location is the cell inner membrane. In Haemophilus influenzae (strain PittEE), this protein is UPF0208 membrane protein CGSHiEE_06015.